The following is a 431-amino-acid chain: Enolase (431 aa).

Gln166 lines the (2R)-2-phosphoglycerate pocket. Glu208 acts as the Proton donor in catalysis. Residues Asp245, Glu288, and Asp315 each coordinate Mg(2+). Positions 340, 369, 370, and 391 each coordinate (2R)-2-phosphoglycerate. The active-site Proton acceptor is the Lys340.

It belongs to the enolase family. It depends on Mg(2+) as a cofactor.

The protein resides in the cytoplasm. The protein localises to the secreted. It is found in the cell surface. It carries out the reaction (2R)-2-phosphoglycerate = phosphoenolpyruvate + H2O. It participates in carbohydrate degradation; glycolysis; pyruvate from D-glyceraldehyde 3-phosphate: step 4/5. Functionally, catalyzes the reversible conversion of 2-phosphoglycerate (2-PG) into phosphoenolpyruvate (PEP). It is essential for the degradation of carbohydrates via glycolysis. The chain is Enolase from Clostridium botulinum (strain 657 / Type Ba4).